The following is a 377-amino-acid chain: Aquaporin-2 (377 aa).

The Cytoplasmic segment spans residues 1–14; the sequence is MAANKGINGGIKNH. Residues 15 to 35 form a helical membrane-spanning segment; the sequence is FIAFLGEFVGTFLFLFFAYGG. The Extracellular segment spans residues 36–56; sequence TQTANQTSQKNPSIVASPDIN. Asn40 carries N-linked (GlcNAc...) asparagine glycosylation. Residues 57–77 traverse the membrane as a helical segment; it reads QLLYIALIFGFSLTVNVWIFF. At 78–87 the chain is on the cytoplasmic side; that stretch reads RVSGGLFNPA. The short motif at 85 to 87 is the NPA 1 element; it reads NPA. Residues 88–108 form a helical membrane-spanning segment; that stretch reads VTIALCLVGVVGPVRSIFIFI. The Extracellular segment spans residues 109 to 144; it reads AQVVASIAAAAAVRGLLPGDTVLFSCALAPGTSIAQ. A helical transmembrane segment spans residues 145–165; sequence GLFLEMFFTIELVFTILMLAA. Residues 166-171 are Cytoplasmic-facing; sequence EKTKVT. Residues 172-192 traverse the membrane as a helical segment; it reads FVAPVGIGLSLFVAELMGVAW. Topologically, residues 193–215 are extracellular; that stretch reads TGGALNPARAFGAEVIGGFRGYH. Residues 198–200 carry the NPA 2 motif; sequence NPA. Residues 216–236 form a helical membrane-spanning segment; that stretch reads WIYWLGPLMGAVLAAGFYKVI. Over 237 to 377 the chain is Cytoplasmic; it reads KFLNYEQVNG…ANAQNRAKTP (141 aa). Disordered stretches follow at residues 278–332 and 358–377; these read LFQT…RENE and RLSG…AKTP. Polar residues-rich tracts occupy residues 315 to 328 and 368 to 377; these read PAQQ…ASTI and ANAQNRAKTP.

Belongs to the MIP/aquaporin (TC 1.A.8) family.

Its subcellular location is the membrane. The catalysed reaction is H2O(in) = H2O(out). It carries out the reaction glycerol(in) = glycerol(out). Water channel required to facilitate the transport of water across membranes. Involved in conidiation. This is Aquaporin-2 from Botryotinia fuckeliana (strain B05.10) (Noble rot fungus).